Reading from the N-terminus, the 809-residue chain is Sucrose synthase 3 (809 aa).

The GT-B glycosyltransferase stretch occupies residues 277 to 755 (MVFNVVILSP…GLQRIYERYT (479 aa)).

It belongs to the glycosyltransferase 1 family. Plant sucrose synthase subfamily. Detected in the whole plant with highest expression in developing siliques, vasculature of cotyledons and stomatal guard cells. Also detected throughout the mature parts of the root but not in the expanding zone.

The catalysed reaction is an NDP-alpha-D-glucose + D-fructose = a ribonucleoside 5'-diphosphate + sucrose + H(+). Sucrose-cleaving enzyme that provides UDP-glucose and fructose for various metabolic pathways. Modulates metabolic homeostasis and direct carbon towards starch synthesis in developing seeds. The sequence is that of Sucrose synthase 3 (SUS3) from Arabidopsis thaliana (Mouse-ear cress).